Reading from the N-terminus, the 36-residue chain is Thrombin-like enzyme TLP (36 aa).

The region spanning 1-36 (IGGFECNEHEHRSLVYLYNSAGFFCAGTLLNHEWVV) is the Peptidase S1 domain.

Belongs to the peptidase S1 family. Snake venom subfamily. Monomer. Expressed by the venom gland.

It localises to the secreted. Its function is as follows. Thrombin-like snake venom serine protease. Shows strong hydrolytic activity towards Boc-Asp(oBzl)-Pro-Arg-MCA, a synthetic substrate for thrombin. This chain is Thrombin-like enzyme TLP, found in Naja naja (Indian cobra).